The following is a 390-amino-acid chain: Na(+)/H(+) antiporter NhaA (390 aa).

Helical transmembrane passes span 13–33 (FQLE…ALVI), 61–81 (LSVH…FVTL), 99–119 (LLPI…YVFI), 129–149 (GWAI…SLLG), 158–178 (VFLT…IAFF), 181–201 (GDLS…LLTL), 209–229 (FIPY…SGIH), 259–279 (AISP…NAGV), 297–317 (ILLG…FIAV), 330–350 (WLSL…SLFV), and 367–387 (IGVL…LLYA).

The protein belongs to the NhaA Na(+)/H(+) (TC 2.A.33) antiporter family.

The protein resides in the cell inner membrane. The enzyme catalyses Na(+)(in) + 2 H(+)(out) = Na(+)(out) + 2 H(+)(in). Functionally, na(+)/H(+) antiporter that extrudes sodium in exchange for external protons. The chain is Na(+)/H(+) antiporter NhaA from Pelagibacter ubique (strain HTCC1062).